We begin with the raw amino-acid sequence, 416 residues long: Serine protease hepsin (416 aa).

The Cytoplasmic portion of the chain corresponds to 1–18; the sequence is MAKEGGRTAPCCSRPKVA. A helical; Signal-anchor for type II membrane protein transmembrane segment spans residues 19–39; sequence ALTVGTLLFLTGIGAASWAIV. The Extracellular segment spans residues 40 to 416; it reads TILLRSDQEP…SEATGMVTQP (377 aa). The 98-residue stretch at 53-150 folds into the SRCR domain; that stretch reads VQLSPGDSRL…RGRFLTATCQ (98 aa). 8 disulfides stabilise this stretch: Cys-76–Cys-139, Cys-89–Cys-149, Cys-118–Cys-137, Cys-152–Cys-276, Cys-187–Cys-203, Cys-290–Cys-358, Cys-321–Cys-337, and Cys-348–Cys-380. The N-linked (GlcNAc...) asparagine glycan is linked to Asn-111. A Peptidase S1 domain is found at 162–404; that stretch reads IVGGQDSSLG…FREWIFQAIK (243 aa). Catalysis depends on charge relay system residues His-202 and Asp-256. Ser-352 (charge relay system) is an active-site residue.

The protein belongs to the peptidase S1 family. In terms of tissue distribution, widely expressed. Present in brain, heart, kidney, liver, stomach, muscle, lung, testis, skin and eye. Not expressed in ovary and thynus. In inner ear tissues, expressed in stria vascularis, modiolus, organ of Corti and spiral ganglion.

It localises to the cell membrane. The protein localises to the apical cell membrane. It catalyses the reaction Cleavage after basic amino-acid residues, with Arg strongly preferred to Lys.. Functionally, serine protease that cleaves extracellular substrates, and contributes to the proteolytic processing of growth factors, such as HGF and MST1/HGFL. Plays a role in cell growth and maintenance of cell morphology. Plays a role in the proteolytic processing of ACE2. Mediates the proteolytic cleavage of urinary UMOD that is required for UMOD polymerization. This chain is Serine protease hepsin (Hpn), found in Rattus norvegicus (Rat).